A 200-amino-acid chain; its full sequence is Putative hydrolase MhqD (200 aa).

Residues Ser100, Asp150, and His181 each act as charge relay system in the active site.

Belongs to the AB hydrolase superfamily. AB hydrolase 2 family.

The protein localises to the cytoplasm. Putative hydrolase that may contribute to the degradation of aromatic compounds. In Bacillus subtilis (strain 168), this protein is Putative hydrolase MhqD (mhqD).